The sequence spans 429 residues: Glutamyl-tRNA reductase (429 aa).

Residues 52–55, Ser-110, 115–117, and Gln-121 contribute to the substrate site; these read TCNR and EAQ. Cys-53 serves as the catalytic Nucleophile. Position 190 to 195 (190 to 195) interacts with NADP(+); the sequence is GAGAMI.

Belongs to the glutamyl-tRNA reductase family. Homodimer.

The enzyme catalyses (S)-4-amino-5-oxopentanoate + tRNA(Glu) + NADP(+) = L-glutamyl-tRNA(Glu) + NADPH + H(+). The protein operates within porphyrin-containing compound metabolism; protoporphyrin-IX biosynthesis; 5-aminolevulinate from L-glutamyl-tRNA(Glu): step 1/2. In terms of biological role, catalyzes the NADPH-dependent reduction of glutamyl-tRNA(Glu) to glutamate 1-semialdehyde (GSA). The chain is Glutamyl-tRNA reductase from Verminephrobacter eiseniae (strain EF01-2).